The sequence spans 441 residues: Tol-Pal system protein TolB (441 aa).

Positions 1-39 (MPAMTPAFRRADLTGFLRTYGAALILLLAAMLAWQPAQA) are cleaved as a signal peptide.

This sequence belongs to the TolB family. In terms of assembly, the Tol-Pal system is composed of five core proteins: the inner membrane proteins TolA, TolQ and TolR, the periplasmic protein TolB and the outer membrane protein Pal. They form a network linking the inner and outer membranes and the peptidoglycan layer.

Its subcellular location is the periplasm. Part of the Tol-Pal system, which plays a role in outer membrane invagination during cell division and is important for maintaining outer membrane integrity. This chain is Tol-Pal system protein TolB, found in Bordetella bronchiseptica (strain ATCC BAA-588 / NCTC 13252 / RB50) (Alcaligenes bronchisepticus).